Here is an 837-residue protein sequence, read N- to C-terminus: Cap-specific mRNA (nucleoside-2'-O-)-methyltransferase 1 (837 aa).

Positions 1 to 66 are disordered; sequence MKRRTDPECT…EGKQPCSDDF (66 aa). The Bipartite nuclear localization signal signature appears at 2–18; it reads KRRTDPECTAPLKKQKR. Residues S27, S30, and S52 each carry the phosphoserine modification. Residues 56–66 show a composition bias toward basic and acidic residues; sequence TEGKQPCSDDF. A G-patch domain is found at 86-132; the sequence is YNSVSQRLMAKMGFREGEGLGKYSQGRKDIVETSNQKGRRGLGLTLQ. A Phosphoserine modification is found at S90. K107 carries the N6-acetyllysine modification. Substrate-binding positions include 202 to 206 and R217; that span reads KSVFD. The RrmJ-type SAM-dependent 2'-O-MTase domain maps to 230–449; it reads FFLNRAAMKM…ERYVVCKGLK (220 aa). An S-adenosyl-L-methionine-binding site is contributed by N233. Residue K238 is part of the active site. S-adenosyl-L-methionine is bound by residues 276–282 and 334–335; these read CAGPGGF and DI. The active site involves D363. 373 to 375 lines the substrate pocket; it reads NLQ. K403 serves as the catalytic Proton acceptor. Position 438 (N438) interacts with substrate. The interaction with POLR2A stretch occupies residues 726–834; the sequence is SGGTPKLSYT…VLSFIQSHNP (109 aa). Positions 751-785 constitute a WW domain; that stretch reads RTVNEPWTMGFSKSNNRKFFYNKKTQKSVYALPTE.

In terms of assembly, interacts with POLR2A (via C-terminus).

The protein resides in the nucleus. The enzyme catalyses a 5'-end (N(7)-methyl 5'-triphosphoguanosine)-ribonucleoside in mRNA + S-adenosyl-L-methionine = a 5'-end (N(7)-methyl 5'-triphosphoguanosine)-(2'-O-methyl-ribonucleoside) in mRNA + S-adenosyl-L-homocysteine + H(+). In terms of biological role, S-adenosyl-L-methionine-dependent methyltransferase that mediates mRNA cap1 2'-O-ribose methylation to the 5'-cap structure of mRNAs. Methylates the ribose of the first nucleotide of a m(7)GpppG-capped mRNA and small nuclear RNA (snRNA) to produce m(7)GpppRm (cap1). Displays a preference for cap0 transcripts. Cap1 modification is linked to higher levels of translation. May be involved in the interferon response pathway. This chain is Cap-specific mRNA (nucleoside-2'-O-)-methyltransferase 1 (Cmtr1), found in Mus musculus (Mouse).